The following is a 266-amino-acid chain: UPF0328 protein ECU05_1610/ECU11_0120 (266 aa).

Belongs to the UPF0328 family.

This chain is UPF0328 protein ECU05_1610/ECU11_0120, found in Encephalitozoon cuniculi (strain GB-M1) (Microsporidian parasite).